The sequence spans 1695 residues: Protein TOPAZ1 (1695 aa).

Disordered stretches follow at residues Met-1–Gln-128, Met-441–Arg-474, and Ala-725–Thr-753. A compositionally biased stretch (basic residues) spans Arg-43–Met-52. Basic and acidic residues-rich tracts occupy residues Gly-59–Ser-68, Ser-92–Thr-113, and Asn-459–Arg-474. Polar residues predominate over residues Ser-735 to Thr-753.

The protein resides in the cytoplasm. Its subcellular location is the cytosol. Functionally, important for normal spermatogenesis and male fertility. Specifically required for progression to the post-meiotic stages of spermatocyte development. Seems to be necessary for normal expression levels of a number of testis-expressed gene transcripts, although its role in this process is unclear. This chain is Protein TOPAZ1 (TOPAZ1), found in Callithrix jacchus (White-tufted-ear marmoset).